We begin with the raw amino-acid sequence, 61 residues long: Metallothionein-II, hippocampal (61 aa).

The residue at position 1 (Met1) is an N-acetylmethionine. Residues 1–29 (MDPNCSCATGGSCTCANSCTCKACKCASC) form a beta region. The a divalent metal cation site is built by Cys5, Cys7, Cys13, Cys15, Cys19, Cys21, Cys24, Cys26, Cys29, Cys33, Cys34, Cys36, Cys37, Cys41, Cys44, Cys48, Cys50, Cys57, Cys59, and Cys60. The alpha stretch occupies residues 30 to 61 (KKSCCSCCPVGCAKCAQGCICKGASDKCSCCA).

This sequence belongs to the metallothionein superfamily. Type 1 family.

Functionally, metallothioneins have a high content of cysteine residues that bind various heavy metals; these proteins are transcriptionally regulated by both heavy metals and glucocorticoids. This isoform may play a role in regulating the transport, accumulation, and compartmentation of zinc in the hippocampus. The sequence is that of Metallothionein-II, hippocampal from Bos taurus (Bovine).